A 356-amino-acid polypeptide reads, in one-letter code: Cytochrome c oxidase subunit 2 (356 aa).

The signal sequence occupies residues 1–23 (MNKGLCNWRLFSLFGMMALLLAG). Positions 24–259 (CGKPFLSTLQ…QNAKKPVVTD (236 aa)) are cytochrome c oxidase subunit II. The next 2 membrane-spanning stretches (helical) occupy residues 45–65 (LMLL…IIFV) and 93–113 (IIWT…TVLT). Residues histidine 178, cysteine 219, cysteine 223, and histidine 227 each contribute to the Cu cation site. A Cytochrome c domain is found at 260 to 356 (PVAKEGEAIF…TKYLMSLKVE (97 aa)). Heme c is bound by residues cysteine 273, cysteine 276, histidine 277, and methionine 331.

The protein belongs to the cytochrome c oxidase subunit 2 family. Requires Cu cation as cofactor. Heme c serves as cofactor.

It is found in the cell membrane. The catalysed reaction is 4 Fe(II)-[cytochrome c] + O2 + 8 H(+)(in) = 4 Fe(III)-[cytochrome c] + 2 H2O + 4 H(+)(out). Its function is as follows. Subunits I and II form the functional core of the enzyme complex. Electrons originating in cytochrome c are transferred via heme a and Cu(A) to the binuclear center formed by heme a3 and Cu(B). The polypeptide is Cytochrome c oxidase subunit 2 (ctaC) (Bacillus sp. (strain PS3)).